The following is a 289-amino-acid chain: NFIL3 like protein (289 aa).

The segment at 1 to 27 (MDVGFSGLPDVSQSHSKTLWGARGRGP) is disordered. Residues 42–105 (DTVYWEKRRK…GLLPLTGGPR (64 aa)) form the bZIP domain. The tract at residues 48–64 (KRRKNNEAAKRSREKRR) is basic motif. Residues 70-91 (IEGRLAALMEENALLKGELKAL) are leucine-zipper.

This sequence belongs to the bZIP family. NFIL3 subfamily.

Its subcellular location is the nucleus. The sequence is that of NFIL3 like protein from Homo sapiens (Human).